A 282-amino-acid chain; its full sequence is Shikimate dehydrogenase (NADP(+)) (282 aa).

Shikimate contacts are provided by residues 24–26 (SRS) and T71. Catalysis depends on K75, which acts as the Proton acceptor. D87 lines the NADP(+) pocket. Shikimate is bound by residues N96 and D112. Residues 138-142 (GAGGA), 162-167 (NRTRIR), and L227 contribute to the NADP(+) site. Y229 lines the shikimate pocket. Residue G250 coordinates NADP(+).

Belongs to the shikimate dehydrogenase family. Homodimer.

The enzyme catalyses shikimate + NADP(+) = 3-dehydroshikimate + NADPH + H(+). It functions in the pathway metabolic intermediate biosynthesis; chorismate biosynthesis; chorismate from D-erythrose 4-phosphate and phosphoenolpyruvate: step 4/7. In terms of biological role, involved in the biosynthesis of the chorismate, which leads to the biosynthesis of aromatic amino acids. Catalyzes the reversible NADPH linked reduction of 3-dehydroshikimate (DHSA) to yield shikimate (SA). In Paracoccus denitrificans (strain Pd 1222), this protein is Shikimate dehydrogenase (NADP(+)).